A 331-amino-acid chain; its full sequence is Holliday junction branch migration complex subunit RuvB (331 aa).

The tract at residues 1 to 186 (MAKTMMQDRL…FGIVQRLEFY (186 aa)) is large ATPase domain (RuvB-L). ATP is bound by residues Ile-25, Arg-26, Gly-67, Lys-70, Thr-71, Thr-72, 133 to 135 (EDF), Arg-176, Tyr-186, and Arg-223. Thr-71 serves as a coordination point for Mg(2+). The interval 187 to 257 (NIADLTTIVS…IAGSALDMLA (71 aa)) is small ATPAse domain (RuvB-S). Residues 260–331 (RRGLDHLDRR…LTQMAIDQMV (72 aa)) form a head domain (RuvB-H) region. DNA-binding residues include Arg-296, Arg-315, and Arg-320.

This sequence belongs to the RuvB family. Homohexamer. Forms an RuvA(8)-RuvB(12)-Holliday junction (HJ) complex. HJ DNA is sandwiched between 2 RuvA tetramers; dsDNA enters through RuvA and exits via RuvB. An RuvB hexamer assembles on each DNA strand where it exits the tetramer. Each RuvB hexamer is contacted by two RuvA subunits (via domain III) on 2 adjacent RuvB subunits; this complex drives branch migration. In the full resolvosome a probable DNA-RuvA(4)-RuvB(12)-RuvC(2) complex forms which resolves the HJ.

The protein localises to the cytoplasm. It catalyses the reaction ATP + H2O = ADP + phosphate + H(+). In terms of biological role, the RuvA-RuvB-RuvC complex processes Holliday junction (HJ) DNA during genetic recombination and DNA repair, while the RuvA-RuvB complex plays an important role in the rescue of blocked DNA replication forks via replication fork reversal (RFR). RuvA specifically binds to HJ cruciform DNA, conferring on it an open structure. The RuvB hexamer acts as an ATP-dependent pump, pulling dsDNA into and through the RuvAB complex. RuvB forms 2 homohexamers on either side of HJ DNA bound by 1 or 2 RuvA tetramers; 4 subunits per hexamer contact DNA at a time. Coordinated motions by a converter formed by DNA-disengaged RuvB subunits stimulates ATP hydrolysis and nucleotide exchange. Immobilization of the converter enables RuvB to convert the ATP-contained energy into a lever motion, pulling 2 nucleotides of DNA out of the RuvA tetramer per ATP hydrolyzed, thus driving DNA branch migration. The RuvB motors rotate together with the DNA substrate, which together with the progressing nucleotide cycle form the mechanistic basis for DNA recombination by continuous HJ branch migration. Branch migration allows RuvC to scan DNA until it finds its consensus sequence, where it cleaves and resolves cruciform DNA. This chain is Holliday junction branch migration complex subunit RuvB, found in Psychrobacter arcticus (strain DSM 17307 / VKM B-2377 / 273-4).